The chain runs to 143 residues: Transcriptional regulator MraZ (143 aa).

2 consecutive SpoVT-AbrB domains span residues 5–47 and 76–119; these read EYQH…PMHE and ATEC…SKVI.

Belongs to the MraZ family. In terms of assembly, forms oligomers.

The protein localises to the cytoplasm. It is found in the nucleoid. This is Transcriptional regulator MraZ from Bacillus subtilis (strain 168).